The primary structure comprises 200 residues: dTTP/UTP pyrophosphatase (200 aa).

Aspartate 81 acts as the Proton acceptor in catalysis.

This sequence belongs to the Maf family. YhdE subfamily. It depends on a divalent metal cation as a cofactor.

Its subcellular location is the cytoplasm. The catalysed reaction is dTTP + H2O = dTMP + diphosphate + H(+). It carries out the reaction UTP + H2O = UMP + diphosphate + H(+). Functionally, nucleoside triphosphate pyrophosphatase that hydrolyzes dTTP and UTP. May have a dual role in cell division arrest and in preventing the incorporation of modified nucleotides into cellular nucleic acids. This chain is dTTP/UTP pyrophosphatase, found in Albidiferax ferrireducens (strain ATCC BAA-621 / DSM 15236 / T118) (Rhodoferax ferrireducens).